Reading from the N-terminus, the 420-residue chain is Gamma-glutamyl phosphate reductase (420 aa).

Belongs to the gamma-glutamyl phosphate reductase family.

The protein localises to the cytoplasm. The catalysed reaction is L-glutamate 5-semialdehyde + phosphate + NADP(+) = L-glutamyl 5-phosphate + NADPH + H(+). Its pathway is amino-acid biosynthesis; L-proline biosynthesis; L-glutamate 5-semialdehyde from L-glutamate: step 2/2. Catalyzes the NADPH-dependent reduction of L-glutamate 5-phosphate into L-glutamate 5-semialdehyde and phosphate. The product spontaneously undergoes cyclization to form 1-pyrroline-5-carboxylate. The protein is Gamma-glutamyl phosphate reductase of Chlorobaculum parvum (strain DSM 263 / NCIMB 8327) (Chlorobium vibrioforme subsp. thiosulfatophilum).